The following is a 1052-amino-acid chain: Mediator of RNA polymerase II transcription subunit 5 (1052 aa).

The tract at residues 949–982 (GGDDEQREQHQQQQPDADQSNQGVVAPTGNTPGN) is disordered. Residues 959–970 (QQQQPDADQSNQ) are compositionally biased toward low complexity.

Belongs to the Mediator complex subunit 5 family. As to quaternary structure, component of the Mediator complex.

The protein localises to the nucleus. Its function is as follows. Component of the Mediator complex, a coactivator involved in the regulated transcription of nearly all RNA polymerase II-dependent genes. Mediator functions as a bridge to convey information from gene-specific regulatory proteins to the basal RNA polymerase II transcription machinery. Mediator is recruited to promoters by direct interactions with regulatory proteins and serves as a scaffold for the assembly of a functional preinitiation complex with RNA polymerase II and the general transcription factors. This is Mediator of RNA polymerase II transcription subunit 5 (NUT1) from Coccidioides immitis (strain RS) (Valley fever fungus).